The chain runs to 516 residues: Sodium channel protein Nach (516 aa).

At 1 to 49 (MGHEEELSPEQVDLKVSPLMGSLKRTWNDFCATSSIHGLRYTRDEDTNR) the chain is on the cytoplasmic side. Residues 50–70 (IVHFVWLLISLVMFICAVVMA) form a helical membrane-spanning segment. Residues 71–452 (RTFYIDFRSN…LVSNLGSAFS (382 aa)) lie on the Extracellular side of the membrane. Asparagine 128, asparagine 165, asparagine 220, and asparagine 348 each carry an N-linked (GlcNAc...) asparagine glycan. The helical transmembrane segment at 453-473 (LFVGMSMLSVVEIMYYFSVIL) threads the bilayer. Residues 474–516 (RKNYVLECEARKKMLHKGPKFAWPKANDSHSKHQKSVFIIHKM) lie on the Cytoplasmic side of the membrane.

The protein belongs to the amiloride-sensitive sodium channel (TC 1.A.6) family.

It localises to the membrane. Its function is as follows. Part of a complex that plays a role in tracheal liquid clearance. Probable role in sodium transport. This is Sodium channel protein Nach (Nach) from Drosophila ananassae (Fruit fly).